We begin with the raw amino-acid sequence, 1088 residues long: Receptor-type guanylate cyclase gcy-17 (1088 aa).

The N-terminal stretch at 1–20 is a signal peptide; that stretch reads MLFLRLFIFTPFLILANCQA. Over 21–480 the chain is Extracellular; it reads RRTIKVGLLF…PPDFVRDYLV (460 aa). Asn33, Asn235, Asn251, Asn321, Asn381, Asn419, and Asn434 each carry an N-linked (GlcNAc...) asparagine glycan. Residues 481–501 form a helical membrane-spanning segment; sequence IVIIIVMFLIFAVSAAVGAVF. Residues 502–1088 lie on the Cytoplasmic side of the membrane; sequence YAIRQKRKEI…SMARSITPEI (587 aa). Residues 529–552 are disordered; it reads SKKSKSEASQRSFASGPSTSTKLT. The segment covering 535–552 has biased composition (polar residues); that stretch reads EASQRSFASGPSTSTKLT. In terms of domain architecture, Protein kinase spans 535–824; that stretch reads EASQRSFASG…KGNLMDHVFN (290 aa). The stretch at 826–854 forms a coiled coil; it reads LETYASTLEEEVNERTKELVEEQKKSDVL. The region spanning 882–1012 is the Guanylate cyclase domain; that stretch reads TIFFSDVVQF…DAVNTASRME (131 aa). The tract at residues 1069 to 1088 is disordered; sequence SNMRKRENTPSMARSITPEI.

This sequence belongs to the adenylyl cyclase class-4/guanylyl cyclase family. In terms of tissue distribution, expressed in PHA sensory neurons.

It is found in the cell membrane. The enzyme catalyses GTP = 3',5'-cyclic GMP + diphosphate. Its function is as follows. Guanylate cyclase involved in the production of the second messenger cGMP. This is Receptor-type guanylate cyclase gcy-17 from Caenorhabditis elegans.